We begin with the raw amino-acid sequence, 472 residues long: GTPase Der (472 aa).

2 EngA-type G domains span residues 3-166 (AVIA…PPAE) and 178-351 (IPVA…AAAH). GTP-binding positions include 9–16 (GRPNVGKS), 56–60 (DTGGM), 118–121 (NKTD), 184–191 (GRPNVGKS), 231–235 (DTAGV), and 296–299 (NKWD). The 85-residue stretch at 352 to 436 (RDLATPELND…PVRIECRASD (85 aa)) folds into the KH-like domain. The tract at residues 434 to 472 (ASDNPFADKPNQLTERQRRRRQRVIHHAKKREKKRKRRR) is disordered. Positions 450–472 (QRRRRQRVIHHAKKREKKRKRRR) are enriched in basic residues.

Belongs to the TRAFAC class TrmE-Era-EngA-EngB-Septin-like GTPase superfamily. EngA (Der) GTPase family. Associates with the 50S ribosomal subunit.

Functionally, GTPase that plays an essential role in the late steps of ribosome biogenesis. This Halorhodospira halophila (strain DSM 244 / SL1) (Ectothiorhodospira halophila (strain DSM 244 / SL1)) protein is GTPase Der.